The primary structure comprises 488 residues: Replication-associated protein (488 aa).

The interval 462–488 is disordered; sequence PRPRQMQRSATEHNLFQYARSGRDPTS.

The protein resides in the host nucleus. Plays an essential for the replication of viral DNA. Presumably cleaves viral genomic dsRNA replicative form to initiate rolling circle replication. The chain is Replication-associated protein from Chaetoceros diatodnavirus 1 (Chaetoceros setoense DNA virus).